The following is a 72-amino-acid chain: DNA gyrase inhibitor YacG (72 aa).

Zn(2+) contacts are provided by C17, C20, C32, and C36. Residues 52 to 72 (PGPEEDEMSYPPHSNDGNRSR) form a disordered region.

The protein belongs to the DNA gyrase inhibitor YacG family. In terms of assembly, interacts with GyrB. Requires Zn(2+) as cofactor.

Inhibits all the catalytic activities of DNA gyrase by preventing its interaction with DNA. Acts by binding directly to the C-terminal domain of GyrB, which probably disrupts DNA binding by the gyrase. The protein is DNA gyrase inhibitor YacG of Methylorubrum extorquens (strain CM4 / NCIMB 13688) (Methylobacterium extorquens).